The sequence spans 674 residues: Probable L-type lectin-domain containing receptor kinase II.1 (674 aa).

Positions 1 to 24 are cleaved as a signal peptide; it reads MAGVLGSVVFWLIIGIHVTFLVFA. Topologically, residues 25-301 are extracellular; that stretch reads QEGDHFVYYD…PSPKRFPLKE (277 aa). The legume-lectin like stretch occupies residues 28–274; the sequence is DHFVYYDFRN…NQYILGWSFK (247 aa). Asn57, Asn117, Asn133, Asn185, Asn210, and Asn242 each carry an N-linked (GlcNAc...) asparagine glycan. A helical transmembrane segment spans residues 302 to 322; sequence VLGATISTIAFLTLGGIVYLY. Residues 323–674 lie on the Cytoplasmic side of the membrane; sequence KKKKYAEVLE…EDVTVLFGGR (352 aa). Positions 355-633 constitute a Protein kinase domain; sequence FRENQLLGAG…LEGNVSVPAI (279 aa). ATP contacts are provided by residues 361–369 and Lys383; that span reads LGAGGFGKV. Catalysis depends on Asp480, which acts as the Proton acceptor.

It in the C-terminal section; belongs to the protein kinase superfamily. Ser/Thr protein kinase family. The protein in the N-terminal section; belongs to the leguminous lectin family.

It localises to the cell membrane. It catalyses the reaction L-seryl-[protein] + ATP = O-phospho-L-seryl-[protein] + ADP + H(+). The catalysed reaction is L-threonyl-[protein] + ATP = O-phospho-L-threonyl-[protein] + ADP + H(+). In Arabidopsis thaliana (Mouse-ear cress), this protein is Probable L-type lectin-domain containing receptor kinase II.1 (LECRK21).